The chain runs to 23 residues: Paralytic peptide 1 (23 aa).

A disulfide bridge links cysteine 7 with cysteine 19.

Belongs to the GBP/PSP1/paralytic peptide family. Hemolymph.

In terms of biological role, causes rapid, rigid paralysis when injected into Lepidopteran larvae. The physiological role may be to reduce hemolymph loss following injury and promote wound healing. The protein is Paralytic peptide 1 of Heliothis virescens (Tobacco budworm moth).